The primary structure comprises 175 residues: Ribosome maturation factor RimM (175 aa).

The PRC barrel domain maps to 96-175; sequence EEDYYWHDLI…TITVDWDAGF (80 aa).

Belongs to the RimM family. Binds ribosomal protein uS19.

The protein resides in the cytoplasm. An accessory protein needed during the final step in the assembly of 30S ribosomal subunit, possibly for assembly of the head region. Essential for efficient processing of 16S rRNA. May be needed both before and after RbfA during the maturation of 16S rRNA. It has affinity for free ribosomal 30S subunits but not for 70S ribosomes. This is Ribosome maturation factor RimM from Haemophilus ducreyi (strain 35000HP / ATCC 700724).